The following is a 437-amino-acid chain: tRNA-2-methylthio-N(6)-dimethylallyladenosine synthase (437 aa).

One can recognise an MTTase N-terminal domain in the interval 1 to 115; that stretch reads MKVYIETMGC…ISQVIHKEKA (115 aa). [4Fe-4S] cluster is bound by residues cysteine 10, cysteine 46, cysteine 78, cysteine 148, cysteine 152, and cysteine 155. The Radical SAM core domain maps to 134 to 367; that stretch reads KKAQIRSLLN…QNRHKEILEE (234 aa). In terms of domain architecture, TRAM spans 370–436; it reads KLEVGKTHVV…KGRLIATAKG (67 aa).

It belongs to the methylthiotransferase family. MiaB subfamily. Monomer. [4Fe-4S] cluster serves as cofactor.

It is found in the cytoplasm. The catalysed reaction is N(6)-dimethylallyladenosine(37) in tRNA + (sulfur carrier)-SH + AH2 + 2 S-adenosyl-L-methionine = 2-methylsulfanyl-N(6)-dimethylallyladenosine(37) in tRNA + (sulfur carrier)-H + 5'-deoxyadenosine + L-methionine + A + S-adenosyl-L-homocysteine + 2 H(+). In terms of biological role, catalyzes the methylthiolation of N6-(dimethylallyl)adenosine (i(6)A), leading to the formation of 2-methylthio-N6-(dimethylallyl)adenosine (ms(2)i(6)A) at position 37 in tRNAs that read codons beginning with uridine. The sequence is that of tRNA-2-methylthio-N(6)-dimethylallyladenosine synthase from Helicobacter pylori (strain Shi470).